Here is an 899-residue protein sequence, read N- to C-terminus: Inositol 1,4,5-triphosphate receptor associated 1 (899 aa).

Disordered stretches follow at residues 32–110 (PGTH…HRHL), 164–286 (RRGR…PLQH), 324–391 (KTAR…EEPG), and 463–486 (AAEQDKGVSPELAPAAEEEESKSG). A compositionally biased stretch (basic residues) spans 100-110 (SPHRRLSHRHL). Ser106 is subject to Phosphoserine. The interaction with PRKG1 stretch occupies residues 140 to 172 (SEEDKKKNLALLEEAKLVSERFLTRRGRKSRSS). The segment covering 171 to 180 (SSLGDSPSAV) has biased composition (polar residues). A compositionally biased stretch (low complexity) spans 181–203 (SPNLSSGASPASSRSCSLTISTS). The segment covering 266–281 (TVEKTKELTVEQKENF) has biased composition (basic and acidic residues). Residues 333–351 (PRTTAQGSGGTVSPHSLGQ) are compositionally biased toward polar residues. At Ser382 the chain carries Phosphoserine. Residues 521–567 (NVFVQLSLAFRNDSYTLESRINQAERERNLTEENTEKELENFKASIT) form an interaction with ITPR1 region. Residues 534–632 (SYTLESRINQ…MQYVENLKRT (99 aa)) are a coiled coil. Phosphoserine occurs at positions 670 and 683. 2 disordered regions span residues 695-722 (LPGQAPSSSPMPSLPALSESSNGKSSIS) and 757-818 (TSQE…DQGS). Residues 699 to 715 (APSSSPMPSLPALSESS) show a composition bias toward low complexity. Basic and acidic residues-rich tracts occupy residues 759–770 (QETKAKAEEEAY) and 777–787 (GVKKTEELQDL). A compositionally biased stretch (acidic residues) spans 788-814 (KEEEEEEQKTESPEEPEEVEETQEDEK). Residues 839–859 (WQVIWMMAAVMLVLSVVLGLY) traverse the membrane as a helical segment. A disordered region spans residues 867–899 (EEADGPPGRSTCSAAQRDSWWSSGLQQELPAEQ). The span at 876-892 (STCSAAQRDSWWSSGLQ) shows a compositional bias: polar residues.

Part of cGMP kinase signaling complex at least composed of ACTA2/alpha-actin, CNN1/calponin H1, PLN/phospholamban, PRKG1 and ITPR1. Interacts with PRKG1/cGKI-beta and ITPR1/IP3R type I. Interacts with HCN4; regulates HCN4 channel activity. In terms of processing, phosphorylated by PRKG1/cGKI. In terms of tissue distribution, highly expressed in smooth muscle such as aorta, colon and uterus. Detected in the brain, in the thalamus, in the hippocampus and myenteric plexus. Highly expressed in megakaryocytes. Down-regulated during macrophage differentiation.

It localises to the membrane. Its subcellular location is the cytoplasm. The protein resides in the perinuclear region. It is found in the sarcoplasmic reticulum. Plays a role as NO/PRKG1-dependent regulator of IP3-induced calcium release; its phosphorylation by PRKG1 inhibits bradykinin and IP3-induced calcium release from intracellular stores. Recruits PRKG1 to the endoplasmic reticulum and may mediate the assembly of PRKG1 and ITPR1 in a macrocomplex. Involved in PRKG1 signaling cascade leading to inhibition of platelet activation and aggregation. Also mediates NO-dependent inhibition of calcium signaling in gastrointestinal smooth muscle contributing to NO-dependent relaxation. Plays a role in the regulation of cellular excitability by regulating the hyperpolarization-activated cyclic nucleotide-gated HCN4 channel activity. This Mus musculus (Mouse) protein is Inositol 1,4,5-triphosphate receptor associated 1 (Irag1).